Here is a 478-residue protein sequence, read N- to C-terminus: Sodium-dependent phosphate transport protein 3 (478 aa).

N-linked (GlcNAc...) asparagine glycans are attached at residues N28, N47, N56, and N69. Transmembrane regions (helical) follow at residues I98–A118, S130–I150, S183–I203, F211–I231, L273–I293, L317–L337, L341–L361, A363–I383, Y405–S425, and N442–G462.

The protein belongs to the major facilitator superfamily. Sodium/anion cotransporter family. As to expression, expressed in the liver, kidney, placenta, lung and thyroid (at protein level).

Its subcellular location is the apical cell membrane. It carries out the reaction 3 Na(+)(out) + phosphate(out) = 3 Na(+)(in) + phosphate(in). The enzyme catalyses urate(out) + n chloride(in) = urate(in) + n chloride(out). Acts as a membrane potential-dependent organic anion transporter, the transport requires a low concentration of chloride ions. Mediates chloride-dependent transport of urate. Can actively transport inorganic phosphate into cells via Na(+) cotransport. The protein is Sodium-dependent phosphate transport protein 3 (Slc17a2) of Mus musculus (Mouse).